Consider the following 248-residue polypeptide: 1-(5-phosphoribosyl)-5-[(5-phosphoribosylamino)methylideneamino] imidazole-4-carboxamide isomerase (248 aa).

Residue Asp-11 is the Proton acceptor of the active site. The active-site Proton donor is Asp-132.

Belongs to the HisA/HisF family.

The protein localises to the cytoplasm. The enzyme catalyses 1-(5-phospho-beta-D-ribosyl)-5-[(5-phospho-beta-D-ribosylamino)methylideneamino]imidazole-4-carboxamide = 5-[(5-phospho-1-deoxy-D-ribulos-1-ylimino)methylamino]-1-(5-phospho-beta-D-ribosyl)imidazole-4-carboxamide. It functions in the pathway amino-acid biosynthesis; L-histidine biosynthesis; L-histidine from 5-phospho-alpha-D-ribose 1-diphosphate: step 4/9. This is 1-(5-phosphoribosyl)-5-[(5-phosphoribosylamino)methylideneamino] imidazole-4-carboxamide isomerase from Bradyrhizobium diazoefficiens (strain JCM 10833 / BCRC 13528 / IAM 13628 / NBRC 14792 / USDA 110).